The chain runs to 153 residues: Insulin-like growth factor 1 (153 aa).

A b region spans residues Gly-49–Thr-77. 3 disulfide bridges follow: Cys-54-Cys-96, Cys-66-Cys-109, and Cys-95-Cys-100. Residues Gly-78–Thr-89 form a c region. An a region spans residues Gly-90 to Ala-110. A d region spans residues Pro-111–Ala-118. Residues Arg-119 to Met-153 constitute a propeptide, e peptide. The segment at Ser-120–Met-153 is disordered. A compositionally biased stretch (basic and acidic residues) spans Arg-125–Leu-138. A compositionally biased stretch (polar residues) spans Lys-139–Met-153.

The protein belongs to the insulin family. In terms of assembly, forms a ternary complex with IGFR1 and ITGAV:ITGB3. Forms a ternary complex with IGFR1 and ITGA6:ITGB4. Forms a ternary complex with IGFBP3 and ALS.

The protein localises to the secreted. Functionally, the insulin-like growth factors, isolated from plasma, are structurally and functionally related to insulin but have a much higher growth-promoting activity. May be a physiological regulator of [1-14C]-2-deoxy-D-glucose (2DG) transport and glycogen synthesis in osteoblasts. Stimulates glucose transport in bone-derived osteoblastic (PyMS) cells and is effective at much lower concentrations than insulin, not only regarding glycogen and DNA synthesis but also with regard to enhancing glucose uptake. May play a role in synapse maturation. Ca(2+)-dependent exocytosis of IGF1 is required for sensory perception of smell in the olfactory bulb. Acts as a ligand for IGF1R. Binds to the alpha subunit of IGF1R, leading to the activation of the intrinsic tyrosine kinase activity which autophosphorylates tyrosine residues in the beta subunit thus initiating a cascade of down-stream signaling events leading to activation of the PI3K-AKT/PKB and the Ras-MAPK pathways. Binds to integrins ITGAV:ITGB3 and ITGA6:ITGB4. Its binding to integrins and subsequent ternary complex formation with integrins and IGFR1 are essential for IGF1 signaling. Induces the phosphorylation and activation of IGFR1, MAPK3/ERK1, MAPK1/ERK2 and AKT1. As part of the MAPK/ERK signaling pathway, acts as a negative regulator of apoptosis in cardiomyocytes via promotion of STUB1/CHIP-mediated ubiquitination and degradation of ICER-type isoforms of CREM. In Sus scrofa (Pig), this protein is Insulin-like growth factor 1.